We begin with the raw amino-acid sequence, 290 residues long: ATP synthase gamma chain (290 aa).

This sequence belongs to the ATPase gamma chain family. As to quaternary structure, F-type ATPases have 2 components, CF(1) - the catalytic core - and CF(0) - the membrane proton channel. CF(1) has five subunits: alpha(3), beta(3), gamma(1), delta(1), epsilon(1). CF(0) has three main subunits: a, b and c.

The protein resides in the cell membrane. In terms of biological role, produces ATP from ADP in the presence of a proton gradient across the membrane. The gamma chain is believed to be important in regulating ATPase activity and the flow of protons through the CF(0) complex. The chain is ATP synthase gamma chain from Wolbachia sp. subsp. Brugia malayi (strain TRS).